A 258-amino-acid chain; its full sequence is Caffeoyl-CoA O-methyltransferase 1 (258 aa).

Positions 1–16 (MATTATEAAPAQEQQA) are enriched in low complexity. The disordered stretch occupies residues 1–31 (MATTATEAAPAQEQQANGNGEQKTRHSEVGH). Residues 22-31 (QKTRHSEVGH) are compositionally biased toward basic and acidic residues. Lysine 32 is a substrate binding site. S-adenosyl-L-methionine is bound by residues threonine 74, glutamate 96, 98–99 (GV), serine 104, aspartate 122, and alanine 151. A substrate-binding site is contributed by aspartate 174. Aspartate 174 is an a divalent metal cation binding site. S-adenosyl-L-methionine is bound at residue aspartate 176. A divalent metal cation-binding residues include aspartate 200 and asparagine 201. Residue asparagine 205 coordinates substrate.

It belongs to the class I-like SAM-binding methyltransferase superfamily. Cation-dependent O-methyltransferase family. CCoAMT subfamily. Requires a divalent metal cation as cofactor.

It carries out the reaction (E)-caffeoyl-CoA + S-adenosyl-L-methionine = (E)-feruloyl-CoA + S-adenosyl-L-homocysteine + H(+). It functions in the pathway aromatic compound metabolism; phenylpropanoid biosynthesis. Its function is as follows. Methylates caffeoyl-CoA to feruloyl-CoA and 5-hydroxyferuloyl-CoA to sinapoyl-CoA. Plays a role in the synthesis of feruloylated polysaccharides. Involved in the reinforcement of the plant cell wall. Also involved in the responding to wounding or pathogen challenge by the increased formation of cell wall-bound ferulic acid polymers. The sequence is that of Caffeoyl-CoA O-methyltransferase 1 (CCOAOMT1) from Zea mays (Maize).